A 327-amino-acid chain; its full sequence is (-)-delta-cadinene synthase (327 aa).

Asp84, Asp85, Asn222, Thr226, and Glu230 together coordinate Mg(2+).

The protein belongs to the terpene synthase family.

It catalyses the reaction (2E,6E)-farnesyl diphosphate = (-)-delta-cadinene + diphosphate. Its function is as follows. Catalyzes the conversion of (2E,6E)-farnesyl diphosphate into (-)-delta-cadinene. Cyclization mechanism involves an intermediate nerolidyl diphosphate leading to a helminthogermacradienyl cation. The polypeptide is (-)-delta-cadinene synthase (Streptomyces clavuligerus).